The following is a 226-amino-acid chain: UPF0502 protein Daci_5373 (226 aa).

Belongs to the UPF0502 family.

This is UPF0502 protein Daci_5373 from Delftia acidovorans (strain DSM 14801 / SPH-1).